A 338-amino-acid chain; its full sequence is Methionine import ATP-binding protein MetN 1 (338 aa).

The region spanning 2-241 (IELHQVSKSF…AKHATTKRFV (240 aa)) is the ABC transporter domain. 38 to 45 (GYSGAGKS) lines the ATP pocket.

The protein belongs to the ABC transporter superfamily. Methionine importer (TC 3.A.1.24) family. The complex is composed of two ATP-binding proteins (MetN), two transmembrane proteins (MetI) and a solute-binding protein (MetQ).

It is found in the cell membrane. It catalyses the reaction L-methionine(out) + ATP + H2O = L-methionine(in) + ADP + phosphate + H(+). It carries out the reaction D-methionine(out) + ATP + H2O = D-methionine(in) + ADP + phosphate + H(+). In terms of biological role, part of the ABC transporter complex MetNIQ involved in methionine import. Responsible for energy coupling to the transport system. The protein is Methionine import ATP-binding protein MetN 1 of Listeria innocua serovar 6a (strain ATCC BAA-680 / CLIP 11262).